The primary structure comprises 223 residues: N-terminal Xaa-Pro-Lys N-methyltransferase 1 (223 aa).

Residue M1 is modified to N-acetylmethionine. T2 is subject to N-acetylthreonine; in N-terminal Xaa-Pro-Lys N-methyltransferase 1, N-terminally processed. S-adenosyl-L-methionine-binding positions include G69, R74, 91–93, 119–120, and Q135; these read DVT and LQ.

It belongs to the methyltransferase superfamily. NTM1 family.

Its subcellular location is the nucleus. The catalysed reaction is N-terminal L-alanyl-L-prolyl-L-lysyl-[protein] + 3 S-adenosyl-L-methionine = N-terminal N,N,N-trimethyl-L-alanyl-L-prolyl-L-lysyl-[protein] + 3 S-adenosyl-L-homocysteine + 3 H(+). The enzyme catalyses N-terminal L-seryl-L-prolyl-L-lysyl-[protein] + 3 S-adenosyl-L-methionine = N-terminal N,N,N-trimethyl-L-seryl-L-prolyl-L-lysyl-[protein] + 3 S-adenosyl-L-homocysteine + 3 H(+). It catalyses the reaction N-terminal L-prolyl-L-prolyl-L-lysyl-[protein] + 2 S-adenosyl-L-methionine = N-terminal N,N-dimethyl-L-prolyl-L-prolyl-L-lysyl-[protein] + 2 S-adenosyl-L-homocysteine + 2 H(+). Functionally, distributive alpha-N-methyltransferase that methylates the N-terminus of target proteins containing the N-terminal motif [Ala/Gly/Pro/Ser]-Pro-Lys when the initiator Met is cleaved. Specifically catalyzes mono-, di- or tri-methylation of the exposed alpha-amino group of the Ala, Gly or Ser residue in the [Ala/Gly/Ser]-Pro-Lys motif and mono- or di-methylation of Pro in the Pro-Pro-Lys motif. Some of the substrates may be primed by NTMT2-mediated monomethylation. Catalyzes the trimethylation of the N-terminal Gly in CENPA (after removal of Met-1). Responsible for the N-terminal methylation of KLHL31, MYL2, MYL3, RB1, RCC1, RPL23A and SET. Required during mitosis for normal bipolar spindle formation and chromosome segregation via its action on RCC1. This Bos taurus (Bovine) protein is N-terminal Xaa-Pro-Lys N-methyltransferase 1 (NTMT1).